The chain runs to 361 residues: Chorismate synthase (361 aa).

NADP(+)-binding residues include R48 and R54. FMN-binding positions include 125 to 127 (RSS), 238 to 239 (NA), G278, 293 to 297 (KPTSS), and R319.

Belongs to the chorismate synthase family. As to quaternary structure, homotetramer. FMNH2 serves as cofactor.

It carries out the reaction 5-O-(1-carboxyvinyl)-3-phosphoshikimate = chorismate + phosphate. Its pathway is metabolic intermediate biosynthesis; chorismate biosynthesis; chorismate from D-erythrose 4-phosphate and phosphoenolpyruvate: step 7/7. Catalyzes the anti-1,4-elimination of the C-3 phosphate and the C-6 proR hydrogen from 5-enolpyruvylshikimate-3-phosphate (EPSP) to yield chorismate, which is the branch point compound that serves as the starting substrate for the three terminal pathways of aromatic amino acid biosynthesis. This reaction introduces a second double bond into the aromatic ring system. This Shigella flexneri serotype 5b (strain 8401) protein is Chorismate synthase.